The sequence spans 263 residues: Pimeloyl-[acyl-carrier protein] methyl ester esterase (263 aa).

Residues W28, 86–87, and 149–153 each bind substrate; these read SL and FLAIQ. The active-site Nucleophile is S86. Active-site residues include D213 and H240. A substrate-binding site is contributed by H240.

It belongs to the AB hydrolase superfamily. Carboxylesterase BioH family. Monomer.

The protein resides in the cytoplasm. It catalyses the reaction 6-carboxyhexanoyl-[ACP] methyl ester + H2O = 6-carboxyhexanoyl-[ACP] + methanol + H(+). Its pathway is cofactor biosynthesis; biotin biosynthesis. Its function is as follows. The physiological role of BioH is to remove the methyl group introduced by BioC when the pimeloyl moiety is complete. It allows to synthesize pimeloyl-ACP via the fatty acid synthetic pathway through the hydrolysis of the ester bonds of pimeloyl-ACP esters. The sequence is that of Pimeloyl-[acyl-carrier protein] methyl ester esterase from Shewanella oneidensis (strain ATCC 700550 / JCM 31522 / CIP 106686 / LMG 19005 / NCIMB 14063 / MR-1).